A 166-amino-acid chain; its full sequence is Packaging efficiency factor P6 (166 aa).

A disordered region spans residues 134–166 (ILPESAGDQQEAEPVPSVGDQQETAPRKRFRAI).

In terms of assembly, heterodimer of P6 and P9; further multimerizes as hexamers of heterodimers. Part of the dodecameric portal complex that is composed of the packaging efficiency factor P6, the DNA packaging ATPase P9, and the internal heterododecamer P20/P22 which spans the virion inner membrane.

Its subcellular location is the virion. Functionally, together with the packaging ATPase P9, forms the external part of the portal vertex that is embeded in the capsid and which plays critical roles in genome packaging and genome ejection. Both proteins multimerize as a single ring-shaped heterdodecamer arranged around a central channel. The chain is Packaging efficiency factor P6 (VI) from Acinetobacter calcoaceticus (Arthrobacter siderocapsulatus).